The sequence spans 590 residues: Glypican-3 (590 aa).

The N-terminal stretch at 1 to 25 is a signal peptide; sequence MMPGLKLYGALILCVLVLPFSRPSS. 7 cysteine pairs are disulfide-bonded: cysteine 30–cysteine 67, cysteine 60–cysteine 255, cysteine 68–cysteine 258, cysteine 190–cysteine 342, cysteine 245–cysteine 278, cysteine 267–cysteine 418, and cysteine 271–cysteine 406. N-linked (GlcNAc...) asparagine glycans are attached at residues asparagine 119 and asparagine 234. The N-linked (GlcNAc...) asparagine glycan is linked to asparagine 414. Disordered regions lie at residues 429–450 and 476–520; these read PGPGLKRVHPHGSESKQKTPEP and WRAR…SGLG. Positions 495–513 are enriched in acidic residues; that stretch reads TDEDEEGLESGDCDDEDEC. O-linked (Xyl...) (glycosaminoglycan) serine glycans are attached at residues serine 504 and serine 517.

It belongs to the glypican family. Heterodimer; disulfide-linked. Cleavage by a furin-like convertase results in production of alpha and beta chains which form a disulfide-linked heterodimer. O-glycosylated; contains heparan sulfate and/or chondroitin sulfate. Post-translationally, cleaved intracellularly by a furin-like convertase to generate 2 subunits, alpha and beta, which remain associated through disulfide bonds and are associated with the cell surface via the GPI-anchor. This processing is essential for its role in inhibition of hedgehog signaling. A second proteolytic event may result in cleavage of the protein on the cell surface, separating it from the GPI-anchor and leading to its shedding from the cell surface. In terms of tissue distribution, maternally expressed and is almost ubiquitous during blastula and gastrula stages but becomes restricted to the prospective hindbrain by 24 hours post-fertilization.

The protein resides in the cell membrane. Its function is as follows. Cell surface proteoglycan. Negatively regulates the hedgehog signaling pathway. Positively regulates the canonical and non-canonical Wnt signaling pathways. Binds to CD81 which decreases the availability of free CD81 for binding to the transcriptional repressor HHEX, resulting in nuclear translocation of HHEX and transcriptional repression. Inhibits the dipeptidyl peptidase activity of DPP4. Plays a role in limb patterning and skeletal development. Modulates the effects of growth factors on renal branching morphogenesis. Required for coronary vascular development. Plays a role in regulating cell movements during gastrulation. The protein is Glypican-3 of Danio rerio (Zebrafish).